Consider the following 100-residue polypeptide: uncharacterized protein (100 aa).

An N-terminal signal peptide occupies residues 1–17 (MIMKYFCTVMIAIALVG). The N-palmitoyl cysteine moiety is linked to residue cysteine 18. Cysteine 18 carries the S-diacylglycerol cysteine lipid modification.

The protein resides in the cell membrane. This is an uncharacterized protein from Salmonella typhi.